The primary structure comprises 548 residues: Calcium-transporting ATPase (548 aa).

A signal peptide spans 1-21; sequence MNFKSTVITAMCCFFSFAVLA. A divalent metal cation contacts are provided by aspartate 37 and threonine 78. Catalysis depends on threonine 78, which acts as the Phosphothreonine intermediate. Residues asparagine 99 and 160–162 each bind substrate; that span reads KDR. An ATP-binding motif is present at residues 179-187; that stretch reads DGKTGDWIT. 5 residues coordinate a divalent metal cation: aspartate 305, histidine 309, aspartate 352, histidine 353, and histidine 488.

It depends on Mg(2+) as a cofactor.

Its subcellular location is the cell inner membrane. The catalysed reaction is Ca(2+)(in) + ATP + H2O = Ca(2+)(out) + ADP + phosphate + H(+). With respect to regulation, completely inhibited by vanadate(3-). Also inhibited by lanthanoid atom and phosphate. Not inhibited by N-ethylmaleimide, 1,3-dicyclohexylcarbodiimide, oligomycin, ouabain, valinomycin, nigericin, thapsigargin, cyclopiazonic acid or fluorescein isothiocyanate. In terms of biological role, catalyzes the hydrolysis of ATP coupled with the transport of calcium. Has some hydrolysis activity also with dATP, GTP, UTP, ITP and 4-nitrophenyl phosphate as substrate. No activity with ADP, CTP, acetyl dihydrogen phosphate or AMP-PNP as substrate. The chain is Calcium-transporting ATPase from Myroides odoratus (Flavobacterium odoratum).